The sequence spans 323 residues: Vertebrate ancient opsin (323 aa).

Over 1–38 (MDTLRIAVNGVSYNEASEIYKPHADPFTGPITNLAPWN) the chain is Extracellular. Residues 39–63 (FAVLATLMFVITSLSLFENFTVMLA) form a helical membrane-spanning segment. Residues 64 to 75 (TYKFKQLRQPLN) are Cytoplasmic-facing. The helical transmembrane segment at 76–100 (YIIVNLSLADFLVSLTGGTISFLTN) threads the bilayer. Topologically, residues 101–115 (ARGYFFLGNWACVLE) are extracellular. Cys112 and Cys189 are joined by a disulfide. Residues 116 to 135 (GFAVTYFGIVAMWSLAVLSF) form a helical membrane-spanning segment. The Cytoplasmic segment spans residues 136 to 154 (ERYFVICRPLGNVRLRGKH). The helical transmembrane segment at 155–178 (AALGLLFVWTFSFIWTIPPVFGWC) threads the bilayer. The Extracellular segment spans residues 179–202 (SYTVSKIGTTCEPNWYSNNIWNHT). A glycan (N-linked (GlcNAc...) asparagine) is linked at Asn200. A helical membrane pass occupies residues 203–230 (YIITFFVTCFIMPLGMIIYCYGKLLQKL). Over 231–250 (RKVSHDRLGNAKKPERQVSR) the chain is Cytoplasmic. The helical transmembrane segment at 251–274 (MVVVMIVAYLVGWTPYAAFSIIVT) threads the bilayer. At 275-282 (ACPTIYLD) the chain is on the extracellular side. The chain crosses the membrane as a helical span at residues 283–307 (PRLAAAPAFFSKTAAVYNPVIYVFM). Lys294 carries the N6-(retinylidene)lysine modification. The Cytoplasmic portion of the chain corresponds to 308–323 (NKQVSTQLNWGFWSRA).

Belongs to the G-protein coupled receptor 1 family. Opsin subfamily. In terms of processing, phosphorylated on some or all of the serine and threonine residues present in the C-terminal region.

The protein resides in the membrane. This Salmo salar (Atlantic salmon) protein is Vertebrate ancient opsin.